The sequence spans 394 residues: Zinc finger and SCAN domain-containing protein 9 (394 aa).

Residue Lys26 forms a Glycyl lysine isopeptide (Lys-Gly) (interchain with G-Cter in SUMO2) linkage. Residues 52-134 (RRHFRQLCYQ…ILLEDLEREL (83 aa)) enclose the SCAN box domain. Glycyl lysine isopeptide (Lys-Gly) (interchain with G-Cter in SUMO2) cross-links involve residues Lys215 and Lys238. C2H2-type zinc fingers lie at residues 254–276 (HKCD…QRIH), 282–304 (YECN…RGIH), 310–332 (YHCK…QRIH), 338–360 (YQCS…QRSH), and 366–388 (HQCI…QKIH).

Belongs to the krueppel C2H2-type zinc-finger protein family.

It is found in the nucleus. In terms of biological role, may be involved in transcriptional regulation. The protein is Zinc finger and SCAN domain-containing protein 9 (ZSCAN9) of Homo sapiens (Human).